We begin with the raw amino-acid sequence, 328 residues long: Deoxynucleotidyltransferase terminal-interacting protein 1 (328 aa).

2 disordered regions span residues 1–30 (MGAT…GAAG) and 142–176 (ELPG…HVLS). Over residues 12–22 (GPGGAERGGLE) the composition is skewed to gly residues. An important for dimerization region spans residues 56–147 (MTTSFTDPAI…RLAHELPGIK (92 aa)). A compositionally biased stretch (basic and acidic residues) spans 142-158 (ELPGIKRGRQAEEESHR). The a.T hook DNA-binding region spans 158-172 (RGSPIPKKRKGRPPG). A Phosphoserine modification is found at Ser-160. Positions 163–169 (PKKRKGR) match the Nuclear localization signal motif. The interval 196–315 (REGPKWDPAR…MRKYMETLRT (120 aa)) is important for DNA and nucleosome binding. The H-T-H motif DNA-binding region spans 215-236 (GSRANKALGMGGTRGRIYIKHP).

In terms of assembly, monomer and homodimer. A minor proportion may form homotrimers. Interacts with ZNF541. Interacts with the terminal deoxynucleotidyltransferase DNTT. Interacts with TRERF1. Identified in a histone deacetylase complex that contains DNTTIP1, HDAC1 and MIDEAS; this complex assembles into a tetramer that contains four copies of each protein chain. Component of a histone deacetylase complex containing DNTTIP1, ZNF541, HDAC1 and HDAC2. Identified in a complex with KCTD19, HDAC1, HDAC2 and ZNF541.

It is found in the nucleus. Increases DNTT terminal deoxynucleotidyltransferase activity (in vitro). Also acts as a transcriptional regulator, binding to the consensus sequence 5'-GNTGCATG-3' following an AT-tract. Associates with RAB20 promoter and positively regulates its transcription. Binds DNA and nucleosomes; may recruit HDAC1 complexes to nucleosomes or naked DNA. This Mus musculus (Mouse) protein is Deoxynucleotidyltransferase terminal-interacting protein 1 (Dnttip1).